The primary structure comprises 276 residues: Molybdenum storage protein subunit alpha (276 aa).

As to quaternary structure, octamer consisting of 4 alpha and 4 beta chains.

Its subcellular location is the cytoplasm. Functionally, intracellular storage of molybdenum. Binds polyoxomolybdates. Can bind at least 90 molybdenum atoms per protein molecule. The protein is Molybdenum storage protein subunit alpha of Azotobacter vinelandii (strain DJ / ATCC BAA-1303).